Here is a 111-residue protein sequence, read N- to C-terminus: ATP synthase subunit c (111 aa).

Transmembrane regions (helical) follow at residues 38-58 and 89-109; these read GLGV…GSGL and AGIA…LIFV.

The protein belongs to the ATPase C chain family. As to quaternary structure, F-type ATPases have 2 components, F(1) - the catalytic core - and F(0) - the membrane proton channel. F(1) has five subunits: alpha(3), beta(3), gamma(1), delta(1), epsilon(1). F(0) has three main subunits: a(1), b(2) and c(10-14). The alpha and beta chains form an alternating ring which encloses part of the gamma chain. F(1) is attached to F(0) by a central stalk formed by the gamma and epsilon chains, while a peripheral stalk is formed by the delta and b chains.

It localises to the cell membrane. F(1)F(0) ATP synthase produces ATP from ADP in the presence of a proton or sodium gradient. F-type ATPases consist of two structural domains, F(1) containing the extramembraneous catalytic core and F(0) containing the membrane proton channel, linked together by a central stalk and a peripheral stalk. During catalysis, ATP synthesis in the catalytic domain of F(1) is coupled via a rotary mechanism of the central stalk subunits to proton translocation. Functionally, key component of the F(0) channel; it plays a direct role in translocation across the membrane. A homomeric c-ring of between 10-14 subunits forms the central stalk rotor element with the F(1) delta and epsilon subunits. The sequence is that of ATP synthase subunit c from Mycoplasmopsis synoviae (strain 53) (Mycoplasma synoviae).